The chain runs to 315 residues: Probable cell division protein WhiA (315 aa).

A DNA-binding region (H-T-H motif) is located at residues 280-313 (SLRELGKMLNPPVGKSGVNHRLRRIEKIADELKQ).

Belongs to the WhiA family.

Its function is as follows. Involved in cell division and chromosome segregation. The polypeptide is Probable cell division protein WhiA (Clostridium botulinum (strain ATCC 19397 / Type A)).